Reading from the N-terminus, the 554-residue chain is (Z)-gamma-bisabolene synthase 2 (554 aa).

Mg(2+) contacts are provided by Asp-306, Asp-310, Asp-450, and Asp-458. Residues 306-310 (DDACD) carry the DDXXD motif motif.

Belongs to the terpene synthase family. Tpsa subfamily. The cofactor is Mg(2+). Mn(2+) serves as cofactor. In terms of tissue distribution, predominantly expressed in roots. Expressed in the cortex and the sub-epidermal layers of roots. Also detected in leaf hydathodes and flower stigmata.

The protein resides in the cytoplasm. It carries out the reaction (2E,6E)-farnesyl diphosphate = (Z)-gamma-bisabolene + diphosphate. It functions in the pathway secondary metabolite biosynthesis; terpenoid biosynthesis. In terms of biological role, involved in sesquiterpene (C15) biosynthesis. The major product is (Z)-gamma-bisabolene with minor amounts of (E)-nerolidol and alpha-bisabolol. The polypeptide is (Z)-gamma-bisabolene synthase 2 (TPS13) (Arabidopsis thaliana (Mouse-ear cress)).